The following is a 96-amino-acid chain: MNLRPLHDRVIVKRLDNETKTASGIVIPDNAAEKPDQGEVLAIGPGKKDDKGNNIALDVKVGDRVLFGKYAGQAVKVEGQELLVMREEDIMAVVNK.

This sequence belongs to the GroES chaperonin family. As to quaternary structure, heptamer of 7 subunits arranged in a ring. Interacts with the chaperonin GroEL.

It is found in the cytoplasm. Its function is as follows. Together with the chaperonin GroEL, plays an essential role in assisting protein folding. The GroEL-GroES system forms a nano-cage that allows encapsulation of the non-native substrate proteins and provides a physical environment optimized to promote and accelerate protein folding. GroES binds to the apical surface of the GroEL ring, thereby capping the opening of the GroEL channel. The polypeptide is Co-chaperonin GroES (Cupriavidus necator (strain ATCC 17699 / DSM 428 / KCTC 22496 / NCIMB 10442 / H16 / Stanier 337) (Ralstonia eutropha)).